The sequence spans 136 residues: Large-conductance mechanosensitive channel (136 aa).

A run of 2 helical transmembrane segments spans residues 10 to 30 and 76 to 96; these read FAMR…AAFG and GVFI…FMAI.

This sequence belongs to the MscL family. Homopentamer.

Its subcellular location is the cell inner membrane. Its function is as follows. Channel that opens in response to stretch forces in the membrane lipid bilayer. May participate in the regulation of osmotic pressure changes within the cell. The sequence is that of Large-conductance mechanosensitive channel from Shigella boydii serotype 18 (strain CDC 3083-94 / BS512).